Consider the following 231-residue polypeptide: MSKLTKRQKTIGDKIDSNKLYALSDAIGLVKEFAVAKFDESIDVAVQLGIDAKKSDQVVRGAVVLPNGTGKTKRVAVFAQGAKAEEAKAAGADIVGMDDLAAEIKAGKMDFDVVIASPDAMRIVGTLGQILGPRGLMPNPKVGTVTPDVATAVKNAKAGQVQFRVDKAGIVHGTIGRRSFDTAKLQGNLAALIDALQKAKPASSKGVYLKKVAVSSTMGVGVRVDTQTIAA.

It belongs to the universal ribosomal protein uL1 family. As to quaternary structure, part of the 50S ribosomal subunit.

Functionally, binds directly to 23S rRNA. The L1 stalk is quite mobile in the ribosome, and is involved in E site tRNA release. Its function is as follows. Protein L1 is also a translational repressor protein, it controls the translation of the L11 operon by binding to its mRNA. The sequence is that of Large ribosomal subunit protein uL1 from Polaromonas sp. (strain JS666 / ATCC BAA-500).